Reading from the N-terminus, the 804-residue chain is E3 ubiquitin-protein ligase RNF10 (804 aa).

3 stretches are compositionally biased toward low complexity: residues 1-31, 78-90, and 104-113; these read MPQSSPSAAATASDMDKNSGSNSSSASSGSS, SNQSRRSNSQKSK, and SKPFSSSSNG. The segment at 1–134 is disordered; the sequence is MPQSSPSAAA…AEFSPAQFSG (134 aa). Ser-5 is subject to Phosphoserine. Ser-110 is subject to Phosphoserine. Over residues 114 to 124 the composition is skewed to basic and acidic residues; that stretch reads GRRDEVAEAQR. A Phosphoserine modification is found at Ser-128. An RING-type zinc finger spans residues 225 to 267; sequence CPICLYPPTAAKITRCGHIFCWACILHYLSLSEKTWSKCPICY. Disordered regions lie at residues 589–611, 646–665, and 715–804; these read DIEKRKRQRQKKAREERRRERRI, DSALGPTSTEGHGALSLSPL, and KADG…VHTK. Basic and acidic residues predominate over residues 601-611; sequence AREERRRERRI. Over residues 646–655 the composition is skewed to polar residues; it reads DSALGPTSTE. Residues 715–729 show a composition bias toward basic and acidic residues; it reads KADGWPKTAPKKDDN. The segment covering 795–804 has biased composition (polar residues); that stretch reads LFSTSVVHTK.

The protein belongs to the RNF10 family. In terms of assembly, interacts with MEOX2.

Its subcellular location is the cytoplasm. The protein resides in the nucleus. It carries out the reaction S-ubiquitinyl-[E2 ubiquitin-conjugating enzyme]-L-cysteine + [acceptor protein]-L-lysine = [E2 ubiquitin-conjugating enzyme]-L-cysteine + N(6)-ubiquitinyl-[acceptor protein]-L-lysine.. Its pathway is protein modification; protein ubiquitination. Its function is as follows. E3 ubiquitin-protein ligase that catalyzes monoubiquitination of 40S ribosomal proteins RPS2/us5 and RPS3/us3 in response to ribosome stalling. Part of a ribosome quality control that takes place when ribosomes have stalled during translation initiation (iRQC): RNF10 acts by mediating monoubiquitination of RPS2/us5 and RPS3/us3, promoting their degradation by the proteasome. Also promotes ubiquitination of 40S ribosomal proteins in response to ribosome stalling during translation elongation. The action of RNF10 in iRQC is counteracted by USP10. May also act as a transcriptional factor involved in the regulation of MAG (Myelin-associated glycoprotein) expression. Acts as a regulator of Schwann cell differentiation and myelination. The sequence is that of E3 ubiquitin-protein ligase RNF10 from Mus musculus (Mouse).